Consider the following 318-residue polypeptide: Beta-sarcoglycan (318 aa).

A disordered region spans residues 1–32; it reads MAAAAAAAAEQQSSNGPVKKSMREKAVERRNV. At 1 to 65 the chain is on the cytoplasmic side; that stretch reads MAAAAAAAAE…GLRGRKGNLA (65 aa). Positions 21–32 are enriched in basic and acidic residues; it reads SMREKAVERRNV. The helical; Signal-anchor for type II membrane protein transmembrane segment at 66–86 threads the bilayer; sequence ICVIVLLFLLAVINLIITLVI. The Extracellular segment spans residues 87–318; it reads WAVIRIGPNG…VSDNPCGNTH (232 aa). N-linked (GlcNAc...) asparagine glycans are attached at residues Asn-158, Asn-211, and Asn-258. Cystine bridges form between Cys-288–Cys-314 and Cys-290–Cys-307.

It belongs to the sarcoglycan beta/delta/gamma/zeta family. In terms of assembly, cross-link to form 2 major subcomplexes: one consisting of SGCB, SGCD and SGCG and the other consisting of SGCB and SGCD. The association between SGCB and SGCG is particularly strong while SGCA is loosely associated with the other sarcoglycans. In terms of processing, disulfide bonds are present.

Its subcellular location is the cell membrane. It is found in the sarcolemma. The protein localises to the cytoplasm. The protein resides in the cytoskeleton. Component of the sarcoglycan complex, a subcomplex of the dystrophin-glycoprotein complex which forms a link between the F-actin cytoskeleton and the extracellular matrix. In Oryctolagus cuniculus (Rabbit), this protein is Beta-sarcoglycan (SGCB).